A 94-amino-acid chain; its full sequence is Large ribosomal subunit protein bL25 (94 aa).

The protein belongs to the bacterial ribosomal protein bL25 family. In terms of assembly, part of the 50S ribosomal subunit; part of the 5S rRNA/L5/L18/L25 subcomplex. Contacts the 5S rRNA. Binds to the 5S rRNA independently of L5 and L18.

Functionally, this is one of the proteins that binds to the 5S RNA in the ribosome where it forms part of the central protuberance. The protein is Large ribosomal subunit protein bL25 of Klebsiella pneumoniae (strain 342).